The chain runs to 75 residues: Small ribosomal subunit protein bS18c (75 aa).

Positions 1–12 are enriched in basic residues; the sequence is MNKSKRSFRRRL. A disordered region spans residues 1-21; sequence MNKSKRSFRRRLPPIGSRDQI.

This sequence belongs to the bacterial ribosomal protein bS18 family. In terms of assembly, part of the 30S ribosomal subunit.

The protein localises to the plastid. The protein resides in the chloroplast. This is Small ribosomal subunit protein bS18c from Cycas taitungensis (Prince sago).